Reading from the N-terminus, the 1184-residue chain is DNA-directed RNA polymerase subunit beta' (1184 aa).

Residues Cys-60, Cys-62, Cys-75, and Cys-78 each coordinate Zn(2+). Mg(2+)-binding residues include Asp-449, Asp-451, and Asp-453. Residues Cys-794, Cys-867, Cys-874, and Cys-877 each contribute to the Zn(2+) site. A disordered region spans residues 1165-1184 (NDQQERQDKEKEETEVKASN).

Belongs to the RNA polymerase beta' chain family. As to quaternary structure, the RNAP catalytic core consists of 2 alpha, 1 beta, 1 beta' and 1 omega subunit. When a sigma factor is associated with the core the holoenzyme is formed, which can initiate transcription. It depends on Mg(2+) as a cofactor. The cofactor is Zn(2+).

It catalyses the reaction RNA(n) + a ribonucleoside 5'-triphosphate = RNA(n+1) + diphosphate. In terms of biological role, DNA-dependent RNA polymerase catalyzes the transcription of DNA into RNA using the four ribonucleoside triphosphates as substrates. The protein is DNA-directed RNA polymerase subunit beta' of Thermoanaerobacter pseudethanolicus (strain ATCC 33223 / 39E) (Clostridium thermohydrosulfuricum).